A 162-amino-acid chain; its full sequence is MTVKKLVKSTHPILNKTIQPVSTYDQKLKVLLEDLEDTLYHEEAAAISAPQIGVDQSVALIDMEQEGLLQLINPVVKSQSQETVSDLEGSISLPHIYGEVKRSKMITVQSYDINGNAVELTAYDDIARMILHMIDHLNGIQFTKRAHHILNETEVEAYFDNE.

It belongs to the polypeptide deformylase family.

The chain is Peptide deformylase-like from Staphylococcus epidermidis (strain ATCC 35984 / DSM 28319 / BCRC 17069 / CCUG 31568 / BM 3577 / RP62A).